The sequence spans 449 residues: Serum response factor homolog (449 aa).

The tract at residues 23 to 166 is disordered; the sequence is LADPADMYGN…PPANGKKTKG (144 aa). Over residues 69-80 the composition is skewed to polar residues; sequence QCQTLHSPQHAS. The segment covering 81-107 has biased composition (low complexity); the sequence is QQQQQQQQQQQQHQQQQQQQQQHPQQQ. Ser156 carries the post-translational modification Phosphoserine. Residues 167-225 form the MADS-box domain; the sequence is RVKIKMEYIDNKLRRYTTFSKRKTGIMKKAYELSTLTGTQVMLLVASETGHVYTFATRK. Disordered regions lie at residues 270–360 and 418–449; these read YNIA…GGGS and LTAS…QEFD. Low complexity-rich tracts occupy residues 317–331 and 345–354; these read SAPP…TASS and TNSGPSTSTA.

As to expression, after germ band retraction, high levels of zygotic expression are observed in a distinct subset of peripheral tracheal cells distributed throughout the embryo and low levels in somatic muscle. Expressed in the future intervein tissue of the wing imaginal disk from the third instar larvae until eclosion of the adult fly (at protein level).

Its subcellular location is the nucleus. In terms of biological role, required for the formation of intervein tissue of the wing. Acts in a dosage-dependent manner to suppress wing vein formation and promote development of intervein cells. Might play a role in the proper formation and maintenance of the trachea. The chain is Serum response factor homolog (bs) from Drosophila melanogaster (Fruit fly).